The following is a 178-amino-acid chain: ATP synthase subunit delta (178 aa).

This sequence belongs to the ATPase delta chain family. As to quaternary structure, F-type ATPases have 2 components, F(1) - the catalytic core - and F(0) - the membrane proton channel. F(1) has five subunits: alpha(3), beta(3), gamma(1), delta(1), epsilon(1). F(0) has three main subunits: a(1), b(2) and c(10-14). The alpha and beta chains form an alternating ring which encloses part of the gamma chain. F(1) is attached to F(0) by a central stalk formed by the gamma and epsilon chains, while a peripheral stalk is formed by the delta and b chains.

The protein localises to the cell membrane. In terms of biological role, f(1)F(0) ATP synthase produces ATP from ADP in the presence of a proton or sodium gradient. F-type ATPases consist of two structural domains, F(1) containing the extramembraneous catalytic core and F(0) containing the membrane proton channel, linked together by a central stalk and a peripheral stalk. During catalysis, ATP synthesis in the catalytic domain of F(1) is coupled via a rotary mechanism of the central stalk subunits to proton translocation. Functionally, this protein is part of the stalk that links CF(0) to CF(1). It either transmits conformational changes from CF(0) to CF(1) or is implicated in proton conduction. The sequence is that of ATP synthase subunit delta from Streptococcus sanguinis (strain SK36).